A 766-amino-acid polypeptide reads, in one-letter code: Alpha-onocerin synthase LCD (766 aa).

PFTB repeat units follow at residues 101–143 (LCRA…GALD), 151–192 (QREI…RLMG), 456–507 (QESY…STTD), 517–558 (IHEC…PGYK), 594–634 (IQEG…LASG), 643–684 (IQRA…HVVH), and 705–752 (LHRA…WALG). Residue Asp488 is the Proton donor of the active site.

Belongs to the terpene cyclase/mutase family.

It catalyses the reaction pre-alpha-onocerin = alpha-onocerin. It participates in secondary metabolite biosynthesis; terpenoid biosynthesis. In terms of biological role, oxidosqualene cyclase involved in the biosynthesis of alpha-onocerin, a triterpenoid characterized by a symmetrical structure due to cyclizations at both termini of dioxidosqualene that inhibits acetylcholinesterase. Catalyzes the second half of the cyclization, exclusively from pre-alpha-onocerin. The polypeptide is Alpha-onocerin synthase LCD (Lycopodium clavatum (Stag's-horn clubmoss)).